The chain runs to 262 residues: Type II restriction enzyme MspI (262 aa).

The catalysed reaction is Endonucleolytic cleavage of DNA to give specific double-stranded fragments with terminal 5'-phosphates.. Its function is as follows. A P subtype restriction enzyme that recognizes the double-stranded sequence 5'-CCGG-3' and cleaves after C-1. The chain is Type II restriction enzyme MspI (mspIR) from Moraxella sp.